The primary structure comprises 56 residues: Ovomucoid (56 aa).

The 51-residue stretch at 6–56 (VDCSEYPKPDCTTEERPLCGSDNKTYGNKCNFCNAVVESNGTLTLSHFGKC) folds into the Kazal-like domain. Cystine bridges form between Cys8-Cys38, Cys16-Cys35, and Cys24-Cys56. Asn45 is a glycosylation site (N-linked (GlcNAc...) asparagine).

Its subcellular location is the secreted. This is Ovomucoid from Francolinus pondicerianus (Grey francolin).